The chain runs to 106 residues: Met repressor (106 aa).

Belongs to the MetJ family. As to quaternary structure, homodimer.

Its subcellular location is the cytoplasm. This regulatory protein, when combined with SAM (S-adenosylmethionine) represses the expression of the methionine regulon and of enzymes involved in SAM synthesis. This Vibrio atlanticus (strain LGP32) (Vibrio splendidus (strain Mel32)) protein is Met repressor.